Reading from the N-terminus, the 109-residue chain is Nucleoid-associated protein Plut_1285 (109 aa).

It belongs to the YbaB/EbfC family. As to quaternary structure, homodimer.

The protein localises to the cytoplasm. Its subcellular location is the nucleoid. In terms of biological role, binds to DNA and alters its conformation. May be involved in regulation of gene expression, nucleoid organization and DNA protection. The polypeptide is Nucleoid-associated protein Plut_1285 (Chlorobium luteolum (strain DSM 273 / BCRC 81028 / 2530) (Pelodictyon luteolum)).